We begin with the raw amino-acid sequence, 351 residues long: Neutral protease 2 homolog MGG_10927 (351 aa).

The N-terminal stretch at 1–16 (MKFSIGVSLLATLAGA) is a signal peptide. Positions 17 to 177 (VNVDMAKRDT…AAFLAKRTIV (161 aa)) are excised as a propeptide. Disulfide bonds link Cys-181/Cys-253 and Cys-260/Cys-278. Zn(2+) is bound at residue His-303. Glu-304 is an active-site residue. Residue His-307 participates in Zn(2+) binding.

This sequence belongs to the peptidase M35 family. Requires Zn(2+) as cofactor.

Its subcellular location is the secreted. The catalysed reaction is Preferential cleavage of bonds with hydrophobic residues in P1'. Also 3-Asn-|-Gln-4 and 8-Gly-|-Ser-9 bonds in insulin B chain.. Secreted metalloproteinase that allows assimilation of proteinaceous substrates. Shows high activities on basic nuclear substrates such as histone and protamine. The polypeptide is Neutral protease 2 homolog MGG_10927 (Colletotrichum graminicola (strain M1.001 / M2 / FGSC 10212) (Maize anthracnose fungus)).